The chain runs to 712 residues: Golgin candidate 3 (712 aa).

A disordered region spans residues D23 to F49. The span at N36–F49 shows a compositional bias: polar residues. Residues A65–R134 adopt a coiled-coil conformation. Residues G135–N150 are compositionally biased toward polar residues. 2 disordered regions span residues G135–F176 and E306–S347. 3 coiled-coil regions span residues Q197 to S313, G340 to M558, and L659 to A690. Residues S328–M344 are compositionally biased toward basic and acidic residues. The GRIP domain occupies R557 to A608. A disordered region spans residues E666–R712. Residues A678–E695 are compositionally biased toward basic and acidic residues. Positions F696–R712 are enriched in polar residues.

Interacts with ARF1; preferentially with the active form of the protein.

The protein resides in the golgi apparatus. The protein localises to the endosome. In terms of biological role, golgi matrix protein playing a role in tethering of vesicles to Golgi membranes and in maintaining the overall structure of the Golgi apparatus. The sequence is that of Golgin candidate 3 (GC3) from Arabidopsis thaliana (Mouse-ear cress).